The chain runs to 282 residues: Pantothenate synthetase (282 aa).

Residue 30–37 (MGNLHDGH) participates in ATP binding. Residue His37 is the Proton donor of the active site. Gln61 contributes to the (R)-pantoate binding site. Gln61 contributes to the beta-alanine binding site. 149–152 (GEKD) is a binding site for ATP. Gln155 provides a ligand contact to (R)-pantoate. ATP is bound at residue 186-189 (MSSR).

The protein belongs to the pantothenate synthetase family. In terms of assembly, homodimer.

It is found in the cytoplasm. The enzyme catalyses (R)-pantoate + beta-alanine + ATP = (R)-pantothenate + AMP + diphosphate + H(+). Its pathway is cofactor biosynthesis; (R)-pantothenate biosynthesis; (R)-pantothenate from (R)-pantoate and beta-alanine: step 1/1. Its function is as follows. Catalyzes the condensation of pantoate with beta-alanine in an ATP-dependent reaction via a pantoyl-adenylate intermediate. This is Pantothenate synthetase from Alteromonas mediterranea (strain DSM 17117 / CIP 110805 / LMG 28347 / Deep ecotype).